The chain runs to 146 residues: Hemagglutinin component HA-17 type D (146 aa).

As to quaternary structure, botulinum toxins are produced as large progenitor toxins of 12S (M toxin, about 280 kDa) and 16S (L toxin, about 650 kDa). M toxin consists of a non-toxic, non-hemagglutinin component (NTNHA) and the neurotoxin (BoNT/D). L toxin consists of the M toxin and the 3 hemagglutinin (HA) subcomponents of 70, 33, and 17 kDa. The stoichiometry of the whole complex has been modeled as one BoNT/D, one NTNHA, three HA-70, six HA-33 and three HA-17. HA-33 and HA-17 crystallize as a heterotrimer with two HA-33 and one HA-17.

Its subcellular location is the secreted. Functionally, the hemagglutinin (HA) component of the progenitor toxin protects the structural integrity of the neurotoxin; may increase internalization of the neurotoxin into the bloodstream of the host. Involved in binding to the small intestine through interactions with glycolipids and glycoproteins containing sialic acid moieties. The hemagglutinin complex composed of HA-70, HA-33 and HA-17 agglutinates erythrocytes, whereas the individual compenents do not. Erythrocyte agglutination also occurs with the entire toxin complex. This is Hemagglutinin component HA-17 type D from Clostridium botulinum D phage (Clostridium botulinum D bacteriophage).